Reading from the N-terminus, the 657-residue chain is Glycogen debranching enzyme (657 aa).

Residue aspartate 336 is the Nucleophile of the active site. Residue glutamate 371 is the Proton donor of the active site. The disordered stretch occupies residues 460–479 (ANGEENRDGTNNNYSNNHGK).

Belongs to the glycosyl hydrolase 13 family.

The catalysed reaction is Hydrolysis of (1-&gt;6)-alpha-D-glucosidic linkages to branches with degrees of polymerization of three or four glucose residues in limit dextrin.. The protein operates within glycan degradation; glycogen degradation. Its function is as follows. Removes maltotriose and maltotetraose chains that are attached by 1,6-alpha-linkage to the limit dextrin main chain, generating a debranched limit dextrin. In Shigella dysenteriae serotype 1 (strain Sd197), this protein is Glycogen debranching enzyme.